Here is a 481-residue protein sequence, read N- to C-terminus: Dual specificity protein kinase CLK4 (481 aa).

Disordered stretches follow at residues 1–46 (MRHS…CKPH) and 102–143 (SKSS…EDDE). A compositionally biased stretch (basic and acidic residues) spans 8 to 24 (HCPDWDSRESWGHESYR). 2 stretches are compositionally biased toward basic residues: residues 25-34 (GSHKRKRRSH) and 106-136 (VRSR…RKRS). Phosphoserine occurs at positions 136 and 138. Residues 159–475 (YEIVDTLGEG…LDEALQHPFF (317 aa)) form the Protein kinase domain. Residues 165–173 (LGEGAFGKV) and Lys-189 each bind ATP. Asp-286 (proton acceptor) is an active-site residue.

Belongs to the protein kinase superfamily. CMGC Ser/Thr protein kinase family. Lammer subfamily. As to quaternary structure, interacts with UBL5. Autophosphorylates on all three types of residues. In terms of tissue distribution, expressed in liver, kidney, heart, muscle, brain and endothelial cells.

The protein resides in the nucleus. The catalysed reaction is L-seryl-[protein] + ATP = O-phospho-L-seryl-[protein] + ADP + H(+). It carries out the reaction L-threonyl-[protein] + ATP = O-phospho-L-threonyl-[protein] + ADP + H(+). It catalyses the reaction L-tyrosyl-[protein] + ATP = O-phospho-L-tyrosyl-[protein] + ADP + H(+). TG003 inhibits its kinase activity and affects the regulation of alternative splicing mediated by phosphorylation of SR proteins. In terms of biological role, dual specificity kinase acting on both serine/threonine and tyrosine-containing substrates. Phosphorylates serine- and arginine-rich (SR) proteins of the spliceosomal complex and may be a constituent of a network of regulatory mechanisms that enable SR proteins to control RNA splicing. Phosphorylates SRSF1 and SRSF3. Required for the regulation of alternative splicing of MAPT/TAU. Regulates the alternative splicing of tissue factor (F3) pre-mRNA in endothelial cells. The sequence is that of Dual specificity protein kinase CLK4 (CLK4) from Homo sapiens (Human).